The primary structure comprises 134 residues: Terepressin/terephysin (134 aa).

An N-terminal signal peptide occupies residues 1–33 (MKCSVLQMSRLSWTACVLLLPLLLLTLQGGVQG). An intrachain disulfide couples cysteine 34 to cysteine 39. The propeptide occupies 44 to 50 (KRAVDSV). 7 disulfides stabilise this stretch: cysteine 56–cysteine 100, cysteine 59–cysteine 73, cysteine 67–cysteine 90, cysteine 74–cysteine 80, cysteine 107–cysteine 121, cysteine 115–cysteine 133, and cysteine 122–cysteine 127.

It belongs to the vasopressin/oxytocin family. In terms of processing, contains 7 disulfide bonds. As to expression, expressed by the venom duct.

The protein localises to the secreted. In Terebra anilis (Auger snail), this protein is Terepressin/terephysin.